Consider the following 275-residue polypeptide: uncharacterized protein (275 aa).

Over residues 148 to 158 (TFPTTAPSITP) the composition is skewed to polar residues. A disordered region spans residues 148–173 (TFPTTAPSITPGNKEGEKTTSTDTDE). A helical transmembrane segment spans residues 187-207 (ILIAVTLLLSGVAIIVFVIFE). The disordered stretch occupies residues 234–264 (GQPPGTAESKPDSQPQKVGQDAANSSNPKKA). A compositionally biased stretch (polar residues) spans 245–261 (DSQPQKVGQDAANSSNP).

Its subcellular location is the membrane. This is an uncharacterized protein from Homo sapiens (Human).